The sequence spans 292 residues: MAQPQLYLPEPFKIAYRKVGQCRRFQQLKKKNGSFKRKGIERWHRAVSTNLLKQNVLVPKEESSSDSDMGFHESQQNQKSNLKTKVKTAFGRMLSYKYRSKPACASQEGSTDHKEALLSNTQSLLPRIVKEFSSPKLFTAKMRKLSENATIQLDVVEAETEEITQGNTLLRARRTTKRLSVTSLPSGLQKGPYSPKKRPHFPALKKKKRGMENILRKSDLTVGKLQMQVDDLIETVTDKSMKLLAQRHAELQQCEFLGDEILQSSKQFQRISKRTMRKYKLKNMTTKGPGDS.

Residues 62-81 (ESSSDSDMGFHESQQNQKSN) form a disordered region.

This is an uncharacterized protein from Homo sapiens (Human).